Here is a 251-residue protein sequence, read N- to C-terminus: MFVDDPSLHTLKRRRLEITDSMEASSSAQAKIADMREKLGREVRVFETSSISQRPSQVSSADDESDDFYEFTPADFYRLLATKKEDKSLKTRKIREAEEAARRSKLTKAVIRVRFPDNHTLEATFHPSEKIQGLIDLVKRVVAHPDVPFYLYTTPPKKQIKDFSQDFYSAGFVPGAIVYFSNDQPKDDGGSSTPYLNEEILSLKDLEAMTKAVEPVESSSEPATVDSSAVPVEHERKSTEKKTTKPKWFKM.

Residue M1 is modified to N-acetylmethionine. A UBX domain is found at 104–180 (SKLTKAVIRV…GFVPGAIVYF (77 aa)). The disordered stretch occupies residues 212–251 (AVEPVESSSEPATVDSSAVPVEHERKSTEKKTTKPKWFKM). Residues 217–227 (ESSSEPATVDS) show a composition bias toward polar residues. Residues 232 to 243 (VEHERKSTEKKT) are compositionally biased toward basic and acidic residues.

In terms of assembly, interacts with CDC48A (non-hexameric) via its UBX-containing C-terminal domain.

It localises to the cytoplasm. In terms of biological role, regulates CDC48A by inhibiting its ATPase activity and by promoting the disassembly of the active hexamer. This chain is Plant UBX domain-containing protein 1, found in Arabidopsis thaliana (Mouse-ear cress).